We begin with the raw amino-acid sequence, 411 residues long: LL-diaminopimelate aminotransferase (411 aa).

Positions 15 and 42 each coordinate substrate. Pyridoxal 5'-phosphate contacts are provided by residues tyrosine 72, 108–109 (SK), tyrosine 132, asparagine 187, tyrosine 218, and 246–248 (SFS). The substrate site is built by lysine 109, tyrosine 132, and asparagine 187. Lysine 249 is subject to N6-(pyridoxal phosphate)lysine. Residues arginine 257 and asparagine 292 each coordinate pyridoxal 5'-phosphate. Residues asparagine 292 and arginine 388 each contribute to the substrate site.

This sequence belongs to the class-I pyridoxal-phosphate-dependent aminotransferase family. LL-diaminopimelate aminotransferase subfamily. Homodimer. Pyridoxal 5'-phosphate is required as a cofactor.

The catalysed reaction is (2S,6S)-2,6-diaminopimelate + 2-oxoglutarate = (S)-2,3,4,5-tetrahydrodipicolinate + L-glutamate + H2O + H(+). Its pathway is amino-acid biosynthesis; L-lysine biosynthesis via DAP pathway; LL-2,6-diaminopimelate from (S)-tetrahydrodipicolinate (aminotransferase route): step 1/1. Involved in the synthesis of meso-diaminopimelate (m-DAP or DL-DAP), required for both lysine and peptidoglycan biosynthesis. Catalyzes the direct conversion of tetrahydrodipicolinate to LL-diaminopimelate. In Gloeothece citriformis (strain PCC 7424) (Cyanothece sp. (strain PCC 7424)), this protein is LL-diaminopimelate aminotransferase.